Consider the following 66-residue polypeptide: Xenoxin-3 (66 aa).

4 disulfide bridges follow: cysteine 3–cysteine 24, cysteine 17–cysteine 37, cysteine 43–cysteine 58, and cysteine 59–cysteine 64.

Expressed by the skin dorsal glands.

It localises to the secreted. Its function is as follows. Lacks alpha-neurotoxic activity, has apparently no antibacterial activity, nor anti-coagulant potency. The chain is Xenoxin-3 from Xenopus laevis (African clawed frog).